Here is a 328-residue protein sequence, read N- to C-terminus: Transcriptional regulator protein Pur-beta-B (328 aa).

Disordered stretches follow at residues 1-35 (MADG…ELAS), 100-124 (SPEQ…RALK), and 289-328 (QERQ…VDDD). Residue A2 is modified to N-acetylalanine. Residues 9-18 (ERGGSSGGPS) show a composition bias toward gly residues. Over residues 24-35 (MSREQETQELAS) the composition is skewed to basic and acidic residues. The tract at residues 27–260 (EQETQELASK…LRVSEVKPSY (234 aa)) is DNA-binding. Basic and acidic residues predominate over residues 289 to 303 (QERQRDKMYDRRGPG). Gly residues predominate over residues 304 to 317 (ERGGSLGPGAGGGG). A compositionally biased stretch (acidic residues) spans 318–328 (DDSETEDVDDD).

The protein belongs to the PUR DNA-binding protein family.

It localises to the nucleus. Its function is as follows. Transcriptional regulator which can act as an activator or a repressor. This is Transcriptional regulator protein Pur-beta-B (purb-b) from Xenopus laevis (African clawed frog).